Here is a 245-residue protein sequence, read N- to C-terminus: MADS-box transcription factor 55 (245 aa).

One can recognise an MADS-box domain in the interval 1–61; the sequence is MARERREIRR…GKLSQFASSN (61 aa). The K-box domain maps to 109–199; the sequence is LQLEHSKCSS…RDQMPQVPTA (91 aa). The interval 197–245 is disordered; sequence PTAGLAVPDTENVLTEDGQSSESVMTALNSGSSQDNDDGSDISLKLGLP. A compositionally biased stretch (polar residues) spans 213 to 224; it reads DGQSSESVMTAL.

As to expression, expressed in roots, shoots and developing panicles. Expressed in shoots.

Its subcellular location is the nucleus. Its function is as follows. Transcription factor that acts as a negative regulator of brassinosteroid signaling. The chain is MADS-box transcription factor 55 (MADS55) from Oryza sativa subsp. japonica (Rice).